A 1126-amino-acid chain; its full sequence is NUT family member 1 (1126 aa).

7 disordered regions span residues 1-56 (MASD…PVFS), 334-367 (IPKK…IPPE), 475-515 (EDAQ…QGAA), 537-559 (QEQT…SPSS), 664-692 (AGML…DDRG), 755-810 (ALNS…GPGL), and 932-1014 (GEGR…EELS). The span at 30–55 (FAPPPPVPPDQPLWEPSPQPPIPPVF) shows a compositional bias: pro residues. Residues 338–353 (AASKTRAPRRRQRKPQ) show a composition bias toward basic residues. The segment covering 962–975 (KLTNGQGQGSTSPR) has biased composition (polar residues). Phosphoserine is present on serine 973. A compositionally biased stretch (basic and acidic residues) spans 987-1005 (TPIKEKCTSADRAKRRETE). 3 positions are modified to phosphoserine: serine 1022, serine 1025, and serine 1027. The segment at 1032–1126 (PLSTRQASGG…SKRKKRRRSQ (95 aa)) is disordered. Residue glutamine 1042 is modified to N5-methylglutamine. The segment covering 1106–1126 (PRKRRRDGFVTSKRKKRRRSQ) has biased composition (basic residues).

This sequence belongs to the NUT family. In terms of processing, methylated at Gln-1042 by N6AMT1. Phosphorylation on Ser-1022, Ser-1025 or Ser-1027 is important for cytoplasmic export.

Its subcellular location is the cytoplasm. It localises to the nucleus. Its function is as follows. Plays a role in the regulation of proliferation. Regulates TERT expression by modulating SP1 binding to TERT promoter binding sites. This is NUT family member 1 from Mus musculus (Mouse).